The sequence spans 815 residues: Minichromosome loss protein 1 (815 aa).

WD repeat units follow at residues 11-50, 53-90, 93-132, 135-174, and 228-267; these read AHTD…EPDS, NHQD…EHTL, RTTL…QIFS, PAKA…LIKF, and ENHS…VVVE. Residues 306–362 are disordered; it reads LKEENDPTKPLTSSKSKNRTSKELDDLFGSDDEQSQNVNDLDGNSANEENEFINHDG. Over residues 340–352 the composition is skewed to polar residues; sequence SQNVNDLDGNSAN. The stretch at 517-553 is one WD 6 repeat; it reads ENESPVTISLSSSVVLVCTSAGYVRVFSRQGFPISIH.

As to quaternary structure, interacts with pof3 and pol1.

The protein resides in the nucleus. Its subcellular location is the chromosome. In terms of biological role, has a role in regulating DNA replication complexes. Acts as a regulator of post DNA replication initiation. Associates with chromatin during G1 and S phases of mitosis. Required for the transcriptional repression of the outer repeats of the centromeric region. Acts as a polymerase alpha replication accessory factor and is important for S-phase DNA damage survival. Plays a role in lagging-strand synthesis and Ozaki fragment processing, in addition to DNA repair. This is Minichromosome loss protein 1 (mcl1) from Schizosaccharomyces pombe (strain 972 / ATCC 24843) (Fission yeast).